A 436-amino-acid polypeptide reads, in one-letter code: GTPase Der (436 aa).

EngA-type G domains are found at residues 4-167 (PIVA…GEEE) and 176-351 (IRLS…ENHK). GTP-binding positions include 10–17 (GRPNVGKS), 57–61 (DTGGI), 119–122 (NKVD), 182–189 (GRPNVGKS), 229–233 (DTAGM), and 294–297 (NKWD). Residues 352–436 (KRVQSSTLNE…PIHIIARKRN (85 aa)) enclose the KH-like domain.

It belongs to the TRAFAC class TrmE-Era-EngA-EngB-Septin-like GTPase superfamily. EngA (Der) GTPase family. In terms of assembly, associates with the 50S ribosomal subunit.

Its function is as follows. GTPase that plays an essential role in the late steps of ribosome biogenesis. This is GTPase Der from Staphylococcus aureus (strain Mu3 / ATCC 700698).